The sequence spans 290 residues: 4-hydroxybenzoate octaprenyltransferase (290 aa).

Helical transmembrane passes span 20-40, 43-63, 92-112, 114-131, 135-155, 160-180, 209-229, 231-251, and 266-286; these read IGIL…AEGV, LDIL…GCVV, EALL…QPLN, LTIE…SYPF, FFAM…PMAF, GEVP…VIAY, VVGV…IGLL, NLGV…LYQY, and FLHN…DYLV.

The protein belongs to the UbiA prenyltransferase family. Requires Mg(2+) as cofactor.

The protein localises to the cell inner membrane. It catalyses the reaction all-trans-octaprenyl diphosphate + 4-hydroxybenzoate = 4-hydroxy-3-(all-trans-octaprenyl)benzoate + diphosphate. The protein operates within cofactor biosynthesis; ubiquinone biosynthesis. Functionally, catalyzes the prenylation of para-hydroxybenzoate (PHB) with an all-trans polyprenyl group. Mediates the second step in the final reaction sequence of ubiquinone-8 (UQ-8) biosynthesis, which is the condensation of the polyisoprenoid side chain with PHB, generating the first membrane-bound Q intermediate 3-octaprenyl-4-hydroxybenzoate. The chain is 4-hydroxybenzoate octaprenyltransferase from Nitrosospira multiformis (strain ATCC 25196 / NCIMB 11849 / C 71).